The chain runs to 272 residues: Putative esterase/lipase 3 (272 aa).

His34 is a catalytic residue. Catalysis depends on Ser100, which acts as the Charge relay system.

It belongs to the lipase/esterase LIP3/BchO family.

The polypeptide is Putative esterase/lipase 3 (Mycoplasma pneumoniae (strain ATCC 29342 / M129 / Subtype 1) (Mycoplasmoides pneumoniae)).